A 184-amino-acid polypeptide reads, in one-letter code: Inactive ribonuclease-like protein 9 (184 aa).

An N-terminal signal peptide occupies residues 1 to 25 (MKPLVIKFAWPLPLLLLLLLPPKLQ). Intrachain disulfides connect C93/C148, C111/C163, and C118/C125. Residues N147 and N179 are each glycosylated (N-linked (GlcNAc...) asparagine).

It belongs to the pancreatic ribonuclease family.

Its subcellular location is the secreted. In terms of biological role, does not exhibit any ribonuclease activity. In Mus musculus (Mouse), this protein is Inactive ribonuclease-like protein 9 (Rnase9).